The sequence spans 153 residues: Small ribosomal subunit protein uS7c (153 aa).

It belongs to the universal ribosomal protein uS7 family. As to quaternary structure, part of the 30S ribosomal subunit.

It localises to the plastid. Functionally, one of the primary rRNA binding proteins, it binds directly to 16S rRNA where it nucleates assembly of the head domain of the 30S subunit. This Helicosporidium sp. subsp. Simulium jonesii (Green alga) protein is Small ribosomal subunit protein uS7c (rps7).